The chain runs to 458 residues: Elongation factor 1-alpha (458 aa).

G2 carries the post-translational modification N,N,N-trimethylglycine. Residue K3 is modified to N6,N6-dimethyllysine; alternate. N6-methyllysine; alternate is present on K3. One can recognise a tr-type G domain in the interval 5-240 (KTHVNVVVIG…DAIDPPQRPS (236 aa)). The G1 stretch occupies residues 14-21 (GHVDSGKS). Position 14–21 (14–21 (GHVDSGKS)) interacts with GTP. An N6-methyllysine modification is found at K30. The interval 70 to 74 (GITID) is G2. N6,N6,N6-trimethyllysine is present on K79. The tract at residues 91–94 (DAPG) is G3. GTP is bound by residues 91–95 (DAPGH) and 153–156 (NKMD). Residues 153–156 (NKMD) form a G4 region. Residues 192-194 (SGW) form a G5 region. K316 bears the N6,N6-dimethyllysine; alternate mark. K316 carries the post-translational modification N6-methyllysine; alternate. Residue K390 is modified to N6-methyllysine.

The protein belongs to the TRAFAC class translation factor GTPase superfamily. Classic translation factor GTPase family. EF-Tu/EF-1A subfamily.

It is found in the cytoplasm. Functionally, this protein promotes the GTP-dependent binding of aminoacyl-tRNA to the A-site of ribosomes during protein biosynthesis. This chain is Elongation factor 1-alpha (TEF-1), found in Absidia glauca (Pin mould).